Consider the following 91-residue polypeptide: Non-hemolytic enterotoxin 105 kDa component (91 aa).

The cofactor is Zn(2+).

Its subcellular location is the secreted. Its function is as follows. This protein is a metalloprotease with gelatinolytic and collagenolytic activity and is a component of the non-hemolytic enterotoxin complex (NHE). The protein is Non-hemolytic enterotoxin 105 kDa component of Bacillus cereus.